We begin with the raw amino-acid sequence, 1101 residues long: Type VI secretion system component TssM1 (1101 aa).

Residues L371 to I391 form a helical membrane-spanning segment.

It localises to the cell inner membrane. Functionally, core component of the type VI (T6SS) secretion system that plays a role in the release of toxins targeting both eukaryotic and prokaryotic species. Plays an essential role in stabilization of assembled TssK1 structure at a fixed perimembrane site. This chain is Type VI secretion system component TssM1, found in Pseudomonas aeruginosa (strain ATCC 15692 / DSM 22644 / CIP 104116 / JCM 14847 / LMG 12228 / 1C / PRS 101 / PAO1).